Consider the following 491-residue polypeptide: Synaptotagmin-9 (491 aa).

Residues 1-52 lie on the Vesicular side of the membrane; that stretch reads MPGARDALCHQALQLLAELCARGALEHDSCQDFIYHLRDRARPRLRDPDISV. The interval 9–31 is cysteine motif; that stretch reads CHQALQLLAELCARGALEHDSCQ. Residues 53–73 form a helical membrane-spanning segment; it reads SLLTLVVTACGLALFGVSLFV. At 74–491 the chain is on the cytoplasmic side; that stretch reads SWKLCWVPWR…AHWHSLLEKR (418 aa). The span at 91 to 104 shows a compositional bias: polar residues; sequence SKDNNQEPLNYTDT. The interval 91–147 is disordered; it reads SKDNNQEPLNYTDTETNEQENSEDFLDPPTPCPDSSMKISHTSPDIPLSTQPGGQDN. The span at 105–116 shows a compositional bias: acidic residues; it reads ETNEQENSEDFL. The span at 127 to 144 shows a compositional bias: polar residues; it reads MKISHTSPDIPLSTQPGG. The residue at position 177 (Ser-177) is a Phosphoserine. C2 domains follow at residues 220 to 341 and 352 to 485; these read ACGK…ILWK and DLGE…AHWH. Ca(2+) contacts are provided by Asp-251, Asp-257, Asp-309, Phe-310, Asp-311, Ser-314, Asp-317, Asp-383, Asp-389, Asp-443, and Asp-445.

It belongs to the synaptotagmin family. Homodimer; disulfide-linked via the cysteine motif. Can also form heterodimers with SYT3, SYT6, SYT7 and SYT10. Requires Ca(2+) as cofactor.

The protein resides in the cytoplasmic vesicle. The protein localises to the secretory vesicle. It is found in the synaptic vesicle membrane. Its function is as follows. May be involved in Ca(2+)-dependent exocytosis of secretory vesicles through Ca(2+) and phospholipid binding to the C2 domain or may serve as Ca(2+) sensors in the process of vesicular trafficking and exocytosis. The sequence is that of Synaptotagmin-9 (Syt9) from Rattus norvegicus (Rat).